The chain runs to 413 residues: uncharacterized protein (413 aa).

Positions 1-22 (MKKSKASALLWLFSLVGFMLHA) are cleaved as a signal peptide.

It is found in the periplasm. In terms of biological role, may be involved in ulvan degradation. Ulvan is the main polysaccharide component of the Ulvales (green seaweed) cell wall. It is composed of disaccharide building blocks comprising 3-sulfated rhamnose (Rha3S) linked to D-glucuronic acid (GlcA), L-iduronic acid (IduA), or D-xylose (Xyl). This is an uncharacterized protein from Formosa agariphila (strain DSM 15362 / KCTC 12365 / LMG 23005 / KMM 3901 / M-2Alg 35-1).